A 670-amino-acid polypeptide reads, in one-letter code: DNA ligase (670 aa).

NAD(+)-binding positions include 34–38 (DFEFD), 83–84 (SL), and Glu-113. The active-site N6-AMP-lysine intermediate is the Lys-115. Arg-136, Glu-173, Lys-288, and Lys-312 together coordinate NAD(+). Cys-406, Cys-409, Cys-424, and Cys-430 together coordinate Zn(2+). One can recognise a BRCT domain in the interval 591 to 670 (PESDKFAGKS…EAEFISLLNS (80 aa)).

This sequence belongs to the NAD-dependent DNA ligase family. LigA subfamily. Requires Mg(2+) as cofactor. Mn(2+) is required as a cofactor.

The catalysed reaction is NAD(+) + (deoxyribonucleotide)n-3'-hydroxyl + 5'-phospho-(deoxyribonucleotide)m = (deoxyribonucleotide)n+m + AMP + beta-nicotinamide D-nucleotide.. Its function is as follows. DNA ligase that catalyzes the formation of phosphodiester linkages between 5'-phosphoryl and 3'-hydroxyl groups in double-stranded DNA using NAD as a coenzyme and as the energy source for the reaction. It is essential for DNA replication and repair of damaged DNA. The sequence is that of DNA ligase from Cytophaga hutchinsonii (strain ATCC 33406 / DSM 1761 / CIP 103989 / NBRC 15051 / NCIMB 9469 / D465).